Consider the following 2197-residue polypeptide: uncharacterized protein (2197 aa).

Serine 2 is subject to N-acetylserine. One copy of the HEAT repeat lies at 2159–2195; it reads TIPFLAELLEDVELSVKSLAQDIIKQMEEMSGESLAE.

Belongs to the HEATR1/UTP10 family.

It is found in the nucleus. The protein resides in the nucleolus. Its function is as follows. Involved in nucleolar processing of pre-18S ribosomal RNA. Involved in ribosome biosynthesis. This is an uncharacterized protein from Arabidopsis thaliana (Mouse-ear cress).